Here is a 446-residue protein sequence, read N- to C-terminus: Tubulin alpha-2 chain (446 aa).

The MREC motif motif lies at 1–4 (MREC). GTP is bound by residues glutamine 11, glutamate 68, serine 137, glycine 141, threonine 142, serine 176, asparagine 203, and asparagine 225. Glutamate 68 contributes to the Mg(2+) binding site. The active site involves glutamate 251.

Belongs to the tubulin family. Dimer of alpha and beta chains. A typical microtubule is a hollow water-filled tube with an outer diameter of 25 nm and an inner diameter of 15 nM. Alpha-beta heterodimers associate head-to-tail to form protofilaments running lengthwise along the microtubule wall with the beta-tubulin subunit facing the microtubule plus end conferring a structural polarity. Microtubules usually have 13 protofilaments but different protofilament numbers can be found in some organisms and specialized cells. It depends on Mg(2+) as a cofactor. Some glutamate residues at the C-terminus are polyglycylated, resulting in polyglycine chains on the gamma-carboxyl group. Glycylation is mainly limited to tubulin incorporated into axonemes (cilia and flagella) whereas glutamylation is prevalent in neuronal cells, centrioles, axonemes, and the mitotic spindle. Both modifications can coexist on the same protein on adjacent residues, and lowering polyglycylation levels increases polyglutamylation, and reciprocally. The precise function of polyglycylation is still unclear. In terms of processing, some glutamate residues at the C-terminus are polyglutamylated, resulting in polyglutamate chains on the gamma-carboxyl group. Polyglutamylation plays a key role in microtubule severing by spastin (SPAST). SPAST preferentially recognizes and acts on microtubules decorated with short polyglutamate tails: severing activity by SPAST increases as the number of glutamates per tubulin rises from one to eight, but decreases beyond this glutamylation threshold. As to expression, testis specific.

Its subcellular location is the cytoplasm. It is found in the cytoskeleton. It catalyses the reaction GTP + H2O = GDP + phosphate + H(+). Functionally, tubulin is the major constituent of microtubules, a cylinder consisting of laterally associated linear protofilaments composed of alpha- and beta-tubulin heterodimers. Microtubules grow by the addition of GTP-tubulin dimers to the microtubule end, where a stabilizing cap forms. Below the cap, tubulin dimers are in GDP-bound state, owing to GTPase activity of alpha-tubulin. The polypeptide is Tubulin alpha-2 chain (Gallus gallus (Chicken)).